We begin with the raw amino-acid sequence, 309 residues long: Zinc finger protein-like 1 homolog (309 aa).

The B box-type; degenerate zinc finger occupies 1–43 (MGLCKCPKRKVTNLFCYEHRVNVCEFCLVDNHPNCVVQSYLTW). The RING-type; atypical zinc finger occupies 53–101 (CSLCKTTLAEGDTIRLNCLHLLHWKCFDEWAANFPATTAPAGYRCPCCS). The tract at residues 200 to 221 (GAESSSDTRPLLQLRDADNEEN) is disordered. The helical transmembrane segment at 254–274 (KIALFVIFLAVLALITIIMVM) threads the bilayer.

Belongs to the ZFPL1 family.

Its subcellular location is the membrane. This chain is Zinc finger protein-like 1 homolog, found in Caenorhabditis elegans.